Reading from the N-terminus, the 1070-residue chain is DNA-directed RNA polymerase subunit beta (1070 aa).

It belongs to the RNA polymerase beta chain family. In plastids the minimal PEP RNA polymerase catalytic core is composed of four subunits: alpha, beta, beta', and beta''. When a (nuclear-encoded) sigma factor is associated with the core the holoenzyme is formed, which can initiate transcription.

The protein resides in the plastid. It is found in the chloroplast. The enzyme catalyses RNA(n) + a ribonucleoside 5'-triphosphate = RNA(n+1) + diphosphate. Functionally, DNA-dependent RNA polymerase catalyzes the transcription of DNA into RNA using the four ribonucleoside triphosphates as substrates. The protein is DNA-directed RNA polymerase subunit beta of Dioscorea elephantipes (Elephant's foot yam).